A 380-amino-acid chain; its full sequence is Cell division protein FtsZ (380 aa).

Residues 27–31 (GAGNN), 119–121 (GTG), Glu-150, and Asn-189 each bind GTP.

It belongs to the FtsZ family. Homodimer. Polymerizes to form a dynamic ring structure in a strictly GTP-dependent manner. Interacts directly with several other division proteins.

Its subcellular location is the cytoplasm. Essential cell division protein that forms a contractile ring structure (Z ring) at the future cell division site. The regulation of the ring assembly controls the timing and the location of cell division. One of the functions of the FtsZ ring is to recruit other cell division proteins to the septum to produce a new cell wall between the dividing cells. Binds GTP and shows GTPase activity. The polypeptide is Cell division protein FtsZ (Mycoplasma pneumoniae (strain ATCC 29342 / M129 / Subtype 1) (Mycoplasmoides pneumoniae)).